The chain runs to 247 residues: 14-3-3 protein gamma-1 (247 aa).

Belongs to the 14-3-3 family. Homodimer, and heterodimer with other family members.

The protein resides in the cytoplasm. Its function is as follows. Adapter protein implicated in the regulation of a large spectrum of both general and specialized signaling pathways. Binds to a large number of partners, usually by recognition of a phosphoserine or phosphothreonine motif. Binding generally results in the modulation of the activity of the binding partner. The sequence is that of 14-3-3 protein gamma-1 (ywhag1) from Danio rerio (Zebrafish).